The following is a 585-amino-acid chain: Zinc finger protein C11D3.17 (585 aa).

2 consecutive C2H2-type zinc fingers follow at residues 31 to 53 (FPCDQCAKRFTRHENLTRHKACH) and 59 to 82 (IPCPYCEIKCKRKDLLKRHIQRFH). Thr553 carries the post-translational modification Phosphothreonine.

The protein resides in the nucleus. This is Zinc finger protein C11D3.17 from Schizosaccharomyces pombe (strain 972 / ATCC 24843) (Fission yeast).